We begin with the raw amino-acid sequence, 142 residues long: Small ribosomal subunit protein uS9 (142 aa).

The protein belongs to the universal ribosomal protein uS9 family. As to quaternary structure, component of the small ribosomal subunit (SSU). Mature N.crassa ribosomes consist of a small (40S) and a large (60S) subunit. The 40S small subunit contains 1 molecule of ribosomal RNA (18S rRNA) and at least 32 different proteins. The large 60S subunit contains 3 rRNA molecules (26S, 5.8S and 5S rRNA) and at least 42 different proteins.

It localises to the cytoplasm. Component of the ribosome, a large ribonucleoprotein complex responsible for the synthesis of proteins in the cell. The small ribosomal subunit (SSU) binds messenger RNAs (mRNAs) and translates the encoded message by selecting cognate aminoacyl-transfer RNA (tRNA) molecules. The large subunit (LSU) contains the ribosomal catalytic site termed the peptidyl transferase center (PTC), which catalyzes the formation of peptide bonds, thereby polymerizing the amino acids delivered by tRNAs into a polypeptide chain. The nascent polypeptides leave the ribosome through a tunnel in the LSU and interact with protein factors that function in enzymatic processing, targeting, and the membrane insertion of nascent chains at the exit of the ribosomal tunnel. The chain is Small ribosomal subunit protein uS9 (rps-16) from Neurospora crassa (strain ATCC 24698 / 74-OR23-1A / CBS 708.71 / DSM 1257 / FGSC 987).